The following is an 89-amino-acid chain: Small ribosomal subunit protein uS15 (89 aa).

Residues 1-16 (MSVADIKKQDIVKDNG) are compositionally biased toward basic and acidic residues. The interval 1–24 (MSVADIKKQDIVKDNGRSANDTGS) is disordered.

This sequence belongs to the universal ribosomal protein uS15 family. In terms of assembly, part of the 30S ribosomal subunit. Forms a bridge to the 50S subunit in the 70S ribosome, contacting the 23S rRNA.

One of the primary rRNA binding proteins, it binds directly to 16S rRNA where it helps nucleate assembly of the platform of the 30S subunit by binding and bridging several RNA helices of the 16S rRNA. In terms of biological role, forms an intersubunit bridge (bridge B4) with the 23S rRNA of the 50S subunit in the ribosome. In Ralstonia pickettii (strain 12J), this protein is Small ribosomal subunit protein uS15.